Reading from the N-terminus, the 230-residue chain is 5'-methylthioadenosine/S-adenosylhomocysteine nucleosidase (230 aa).

The Proton acceptor role is filled by E12. Substrate-binding positions include G78, I153, and 174–175 (ME). Catalysis depends on D198, which acts as the Proton donor.

The protein belongs to the PNP/UDP phosphorylase family. MtnN subfamily.

It catalyses the reaction S-adenosyl-L-homocysteine + H2O = S-(5-deoxy-D-ribos-5-yl)-L-homocysteine + adenine. It carries out the reaction S-methyl-5'-thioadenosine + H2O = 5-(methylsulfanyl)-D-ribose + adenine. The enzyme catalyses 5'-deoxyadenosine + H2O = 5-deoxy-D-ribose + adenine. The protein operates within amino-acid biosynthesis; L-methionine biosynthesis via salvage pathway; S-methyl-5-thio-alpha-D-ribose 1-phosphate from S-methyl-5'-thioadenosine (hydrolase route): step 1/2. In terms of biological role, catalyzes the irreversible cleavage of the glycosidic bond in both 5'-methylthioadenosine (MTA) and S-adenosylhomocysteine (SAH/AdoHcy) to adenine and the corresponding thioribose, 5'-methylthioribose and S-ribosylhomocysteine, respectively. Also cleaves 5'-deoxyadenosine, a toxic by-product of radical S-adenosylmethionine (SAM) enzymes, into 5-deoxyribose and adenine. In Shewanella loihica (strain ATCC BAA-1088 / PV-4), this protein is 5'-methylthioadenosine/S-adenosylhomocysteine nucleosidase.